The chain runs to 346 residues: Serine/threonine-protein phosphatase PP1(4.8) (346 aa).

The segment at 46–65 is disordered; sequence QSAQTQESTPKTNGTGRATT. Asp-102, His-104, Asp-130, and Asn-162 together coordinate Mn(2+). The active-site Proton donor is the His-163. Residues His-211 and His-287 each contribute to the Mn(2+) site.

It belongs to the PPP phosphatase family. PP-1 subfamily. Mn(2+) serves as cofactor.

The enzyme catalyses O-phospho-L-seryl-[protein] + H2O = L-seryl-[protein] + phosphate. The catalysed reaction is O-phospho-L-threonyl-[protein] + H2O = L-threonyl-[protein] + phosphate. This chain is Serine/threonine-protein phosphatase PP1(4.8), found in Trypanosoma brucei brucei.